The following is a 155-amino-acid chain: Ribosomal RNA large subunit methyltransferase H (155 aa).

S-adenosyl-L-methionine contacts are provided by residues L73, G104, and 123-128 (LSPLTL).

It belongs to the RNA methyltransferase RlmH family. As to quaternary structure, homodimer.

It localises to the cytoplasm. The catalysed reaction is pseudouridine(1915) in 23S rRNA + S-adenosyl-L-methionine = N(3)-methylpseudouridine(1915) in 23S rRNA + S-adenosyl-L-homocysteine + H(+). Functionally, specifically methylates the pseudouridine at position 1915 (m3Psi1915) in 23S rRNA. This is Ribosomal RNA large subunit methyltransferase H from Pseudomonas putida (strain ATCC 700007 / DSM 6899 / JCM 31910 / BCRC 17059 / LMG 24140 / F1).